Here is a 289-residue protein sequence, read N- to C-terminus: Mitochondrial fission regulator 1-like (289 aa).

Thr-27 carries the post-translational modification Phosphothreonine. Ser-38 carries the post-translational modification Phosphoserine. Ser-100 bears the Phosphoserine; by AMPK mark. Phosphoserine occurs at positions 107, 221, and 222. Ser-235 carries the phosphoserine; by AMPK modification. 2 positions are modified to phosphoserine: Ser-258 and Ser-270.

Belongs to the MTFR1 family. In terms of processing, phosphorylated by AMPK. Upon stress, phosphorylation at Ser-100 and Ser-235 by AMPK is sufficient to induce mitochondrial fragmentation.

It is found in the mitochondrion outer membrane. Functionally, mitochondrial protein required for adaptation of miochondrial dynamics to metabolic changes. Regulates mitochondrial morphology at steady state and mediates AMPK-dependent stress-induced mitochondrial fragmentation via the control of OPA1 levels. This Mus musculus (Mouse) protein is Mitochondrial fission regulator 1-like (Mtfr1l).